The primary structure comprises 134 residues: ATP synthase epsilon chain (134 aa).

This sequence belongs to the ATPase epsilon chain family. In terms of assembly, F-type ATPases have 2 components, CF(1) - the catalytic core - and CF(0) - the membrane proton channel. CF(1) has five subunits: alpha(3), beta(3), gamma(1), delta(1), epsilon(1). CF(0) has three main subunits: a, b and c.

Its subcellular location is the cell membrane. Produces ATP from ADP in the presence of a proton gradient across the membrane. The polypeptide is ATP synthase epsilon chain (Alkaliphilus metalliredigens (strain QYMF)).